The following is a 248-amino-acid chain: Cyclin-Q (248 aa).

Methionine 1 carries the N-acetylmethionine modification. The segment covering 1 to 12 (MEAPEGGGGGPA) has biased composition (gly residues). The interval 1–21 (MEAPEGGGGGPAARGPEGQPA) is disordered.

It belongs to the cyclin family. Cyclin-like FAM58 subfamily. Associates with CDK10 to promote its kinase activity. Interacts with SALL1.

In terms of biological role, activating cyclin for the cyclin-associated kinase CDK10. This Homo sapiens (Human) protein is Cyclin-Q.